Here is a 308-residue protein sequence, read N- to C-terminus: Ribosomal RNA small subunit methyltransferase H (308 aa).

S-adenosyl-L-methionine is bound by residues 36–38, aspartate 55, phenylalanine 86, aspartate 103, and glutamine 110; that span reads GGH.

This sequence belongs to the methyltransferase superfamily. RsmH family.

It localises to the cytoplasm. It catalyses the reaction cytidine(1402) in 16S rRNA + S-adenosyl-L-methionine = N(4)-methylcytidine(1402) in 16S rRNA + S-adenosyl-L-homocysteine + H(+). Its function is as follows. Specifically methylates the N4 position of cytidine in position 1402 (C1402) of 16S rRNA. The protein is Ribosomal RNA small subunit methyltransferase H of Helicobacter pylori (strain P12).